Reading from the N-terminus, the 197-residue chain is Probable nicotinate-nucleotide adenylyltransferase (197 aa).

The protein belongs to the NadD family.

The enzyme catalyses nicotinate beta-D-ribonucleotide + ATP + H(+) = deamido-NAD(+) + diphosphate. It participates in cofactor biosynthesis; NAD(+) biosynthesis; deamido-NAD(+) from nicotinate D-ribonucleotide: step 1/1. Functionally, catalyzes the reversible adenylation of nicotinate mononucleotide (NaMN) to nicotinic acid adenine dinucleotide (NaAD). The polypeptide is Probable nicotinate-nucleotide adenylyltransferase (Chlorobium phaeobacteroides (strain DSM 266 / SMG 266 / 2430)).